The sequence spans 84 residues: UPF0512 protein O (84 aa).

This sequence belongs to the UPF0512 family.

This is UPF0512 protein O from Dictyostelium discoideum (Social amoeba).